The primary structure comprises 284 residues: MTAQIIDGKAIAQSIRTQLREKVTARKEAGQRVPGLAVILVGADPASQVYVGSKRKACEEVGFISRSYDLDTSYTEEALLALIDELNDDPTIDGILVQLPLPAHIEDSKVIERIRPDKDVDGFHPYNVGRLAQRIPVLRSCTPMGIMTLIKSTGVDTYGLDAVVVGASNIVGRPMTLELLLAGCTTTTCHRFTKNLEQKIRQADLVVVAVGKPGFIPGEWIKPGAIVIDVGINRLENGTLVGDVQYEVAAQNASFITPVPGGVGPMTIASLLENTLYAAEQYHD.

Residues 166-168 and isoleucine 232 contribute to the NADP(+) site; that span reads GAS.

It belongs to the tetrahydrofolate dehydrogenase/cyclohydrolase family. As to quaternary structure, homodimer.

It catalyses the reaction (6R)-5,10-methylene-5,6,7,8-tetrahydrofolate + NADP(+) = (6R)-5,10-methenyltetrahydrofolate + NADPH. The catalysed reaction is (6R)-5,10-methenyltetrahydrofolate + H2O = (6R)-10-formyltetrahydrofolate + H(+). The protein operates within one-carbon metabolism; tetrahydrofolate interconversion. Its function is as follows. Catalyzes the oxidation of 5,10-methylenetetrahydrofolate to 5,10-methenyltetrahydrofolate and then the hydrolysis of 5,10-methenyltetrahydrofolate to 10-formyltetrahydrofolate. The polypeptide is Bifunctional protein FolD (Shewanella sp. (strain MR-7)).